We begin with the raw amino-acid sequence, 103 residues long: Large ribosomal subunit protein uL23 (103 aa).

Belongs to the universal ribosomal protein uL23 family. In terms of assembly, part of the 50S ribosomal subunit. Contacts protein L29, and trigger factor when it is bound to the ribosome.

Functionally, one of the early assembly proteins it binds 23S rRNA. One of the proteins that surrounds the polypeptide exit tunnel on the outside of the ribosome. Forms the main docking site for trigger factor binding to the ribosome. In Chlorobaculum tepidum (strain ATCC 49652 / DSM 12025 / NBRC 103806 / TLS) (Chlorobium tepidum), this protein is Large ribosomal subunit protein uL23.